Reading from the N-terminus, the 407-residue chain is Probable cysteine protease atg4 (407 aa).

C136 (nucleophile) is an active-site residue. Residues D310 and H312 contribute to the active site.

It belongs to the peptidase C54 family.

It is found in the cytoplasm. It localises to the nucleus. The protein resides in the preautophagosomal structure. It carries out the reaction [protein]-C-terminal L-amino acid-glycyl-phosphatidylethanolamide + H2O = [protein]-C-terminal L-amino acid-glycine + a 1,2-diacyl-sn-glycero-3-phosphoethanolamine. In terms of biological role, cysteine protease that is required for autophagy. Plays a key role in cytoplasm to vacuole transport (Cvt) and autophagy by mediating both proteolytic activation and delipidation of atg8. The protease activity is required for proteolytic activation of atg8 by the cleavage of the C-terminal amino acid of atg8 to reveal a C-terminal glycine. Azg8 ubiquitin-like activity requires the exposure of the glycine at the C-terminus for its conjugation to phosphatidylethanolamine (PE) and its insertion to membranes, which is necessary for autophagy. The atg8-PE conjugate mediates tethering between adjacent membranes and stimulates membrane hemifusion, leading to expansion of the autophagosomal membrane during autophagy. In addition to the protease activity, also catalyzes deconjugation of PE-conjugated forms of atg8 during macroautophagy since atg8 delipidation is required to release the protein from membranes, which facilitates multiple events during macroautophagy, and especially for efficient autophagosome biogenesis, the assembly of atg99-containing tubulovesicular clusters into phagophores/autophagosomes, and for the disassembly of PAS-associated ATG components. Atg8 delipidation by atg4 also recycles atg8-PE generated on inappropriate membranes to maintain a reservoir of unlipidated atg8 that is required for autophagosome formation at the PAS. This is Probable cysteine protease atg4 from Aspergillus oryzae (strain ATCC 42149 / RIB 40) (Yellow koji mold).